The sequence spans 225 residues: J-type co-chaperone jac1, mitochondrial (225 aa).

The N-terminal 49 residues, Met1–His49, are a transit peptide targeting the mitochondrion. Residues Asn61–Leu137 form the J domain. Positions His98 to Asp100 match the HSP70 binding motif.

The protein belongs to the HscB family. In terms of assembly, interacts with ssc1.

Its subcellular location is the mitochondrion matrix. Functionally, co-chaperone required for the assembly of iron-sulfur (Fe/S) clusters in mitochondria. Stimulates the ATPase activity of the mitochondrial Hsp70 chaperone ssc1, to mediate the transfer of iron-sulfur clusters from isu1 to grx5. This is J-type co-chaperone jac1, mitochondrial from Schizosaccharomyces pombe (strain 972 / ATCC 24843) (Fission yeast).